The following is a 194-amino-acid chain: Large ribosomal subunit protein bL9 (194 aa).

The interval 165-194 is disordered; the sequence is PEDAEEAVANEEEAEAALLDDEDADEYEQG. A compositionally biased stretch (acidic residues) spans 166-194; it reads EDAEEAVANEEEAEAALLDDEDADEYEQG.

It belongs to the bacterial ribosomal protein bL9 family.

Functionally, binds to the 23S rRNA. The chain is Large ribosomal subunit protein bL9 from Rhodospirillum rubrum (strain ATCC 11170 / ATH 1.1.1 / DSM 467 / LMG 4362 / NCIMB 8255 / S1).